The sequence spans 160 residues: Lipoprotein signal peptidase (160 aa).

2 helical membrane-spanning segments follow: residues 60-80 (IEWL…AFFI) and 84-104 (LPFL…AGTV). Active-site residues include Asp118 and Asp132. A helical transmembrane segment spans residues 128-148 (FNIADSCLTVGVIGLLLLYIV).

It belongs to the peptidase A8 family.

The protein resides in the cell membrane. It catalyses the reaction Release of signal peptides from bacterial membrane prolipoproteins. Hydrolyzes -Xaa-Yaa-Zaa-|-(S,diacylglyceryl)Cys-, in which Xaa is hydrophobic (preferably Leu), and Yaa (Ala or Ser) and Zaa (Gly or Ala) have small, neutral side chains.. The protein operates within protein modification; lipoprotein biosynthesis (signal peptide cleavage). Its function is as follows. This protein specifically catalyzes the removal of signal peptides from prolipoproteins. The polypeptide is Lipoprotein signal peptidase (Dehalococcoides mccartyi (strain CBDB1)).